A 397-amino-acid polypeptide reads, in one-letter code: Cytochrome b (397 aa).

The next 4 helical transmembrane spans lie at 48 to 68, 92 to 113, 128 to 148, and 193 to 213; these read FGSM…LLSA, WMLR…YAHI, WYFG…GYTL, and FYTL…LHLF. Residues histidine 98 and histidine 112 each contribute to the heme b site. Heme b contacts are provided by histidine 197 and histidine 211. Residue histidine 216 participates in a ubiquinone binding. 4 consecutive transmembrane segments (helical) span residues 241–261, 303–323, 335–355, and 362–382; these read IKDL…VCVD, AGGV…PTLH, LNQV…WIGA, and YIIL…WTPF.

It belongs to the cytochrome b family. As to quaternary structure, the main subunits of complex b-c1 are: cytochrome b, cytochrome c1 and the Rieske protein. Heme b is required as a cofactor.

It localises to the mitochondrion inner membrane. Functionally, component of the ubiquinol-cytochrome c reductase complex (complex III or cytochrome b-c1 complex) that is part of the mitochondrial respiratory chain. The b-c1 complex mediates electron transfer from ubiquinol to cytochrome c. Contributes to the generation of a proton gradient across the mitochondrial membrane that is then used for ATP synthesis. The polypeptide is Cytochrome b (MT-CYB) (Mytilus edulis (Blue mussel)).